The sequence spans 737 residues: Transcription termination factor Rho (737 aa).

The tract at residues 1–396 is disordered; it reads MSGPCSAHRV…ENSYLPDPTD (396 aa). 3 stretches are compositionally biased toward low complexity: residues 16–28, 62–86, and 101–111; these read RPTIRSPRITRSS, ASRASSESRSESGSGLSAEGSGSDA, and DAESAPTAADT. Basic and acidic residues-rich tracts occupy residues 145 to 175, 196 to 256, 266 to 279, and 286 to 324; these read PRAESPRSEPRTESRPEPRAENGSETRHESR, SMER…DRRD, GRPDNRGPGGDRHQ, and DRSHDRGPDRNNERAFDRPERPDRQGESSDRFDSQDRGG. The span at 328-339 shows a compositional bias: basic residues; the sequence is RNGRRGRNRFRR. Over residues 347–360 the composition is skewed to polar residues; sequence APISGSHAPSQGSP. The Rho RNA-BD domain maps to 367–439; the sequence is EGTMAGWFDP…IEVQTLNDGS (73 aa). The segment covering 376–387 has biased composition (basic and acidic residues); that stretch reads PSRDGGFLRRPE. Residues 487–492, 499–504, and Arg530 contribute to the ATP site; these read GYGQRA and RAGKTT.

The protein belongs to the Rho family. Homohexamer. The homohexamer assembles into an open ring structure.

Its function is as follows. Facilitates transcription termination by a mechanism that involves Rho binding to the nascent RNA, activation of Rho's RNA-dependent ATPase activity, and release of the mRNA from the DNA template. The chain is Transcription termination factor Rho from Gemmatimonas aurantiaca (strain DSM 14586 / JCM 11422 / NBRC 100505 / T-27).